Consider the following 406-residue polypeptide: Acetate kinase (406 aa).

Asn-8 is a Mg(2+) binding site. Lys-15 contributes to the ATP binding site. Arg-92 contributes to the substrate binding site. Asp-149 (proton donor/acceptor) is an active-site residue. ATP contacts are provided by residues 209–213 (HLGNG), 283–285 (DFR), and 331–335 (GVGEN). Residue Glu-385 coordinates Mg(2+).

The protein belongs to the acetokinase family. In terms of assembly, homodimer. Mg(2+) serves as cofactor. The cofactor is Mn(2+).

The protein localises to the cytoplasm. It catalyses the reaction acetate + ATP = acetyl phosphate + ADP. It participates in metabolic intermediate biosynthesis; acetyl-CoA biosynthesis; acetyl-CoA from acetate: step 1/2. Catalyzes the formation of acetyl phosphate from acetate and ATP. Can also catalyze the reverse reaction. In Corynebacterium aurimucosum (strain ATCC 700975 / DSM 44827 / CIP 107346 / CN-1) (Corynebacterium nigricans), this protein is Acetate kinase.